Reading from the N-terminus, the 99-residue chain is Nucleoid-associated protein EbfC (99 aa).

This sequence belongs to the YbaB/EbfC family. As to quaternary structure, homodimer.

Its subcellular location is the cytoplasm. It is found in the nucleoid. In terms of biological role, binds to DNA and alters its conformation. May be involved in regulation of gene expression, nucleoid organization and DNA protection. The protein is Nucleoid-associated protein EbfC of Borreliella afzelii (strain PKo) (Borrelia afzelii).